Consider the following 675-residue polypeptide: DNA ligase (675 aa).

NAD(+)-binding positions include 34-38 (DAEYD), 83-84 (SL), and Glu116. Catalysis depends on Lys118, which acts as the N6-AMP-lysine intermediate. NAD(+) is bound by residues Arg139, Glu176, Lys293, and Lys317. Residues Cys411, Cys414, Cys429, and Cys435 each contribute to the Zn(2+) site. A BRCT domain is found at 594-675 (AGENPFKGKT…FLAIVNAYKR (82 aa)).

This sequence belongs to the NAD-dependent DNA ligase family. LigA subfamily. Requires Mg(2+) as cofactor. Mn(2+) serves as cofactor.

The catalysed reaction is NAD(+) + (deoxyribonucleotide)n-3'-hydroxyl + 5'-phospho-(deoxyribonucleotide)m = (deoxyribonucleotide)n+m + AMP + beta-nicotinamide D-nucleotide.. DNA ligase that catalyzes the formation of phosphodiester linkages between 5'-phosphoryl and 3'-hydroxyl groups in double-stranded DNA using NAD as a coenzyme and as the energy source for the reaction. It is essential for DNA replication and repair of damaged DNA. The chain is DNA ligase from Mannheimia succiniciproducens (strain KCTC 0769BP / MBEL55E).